The following is a 323-amino-acid chain: tRNA dimethylallyltransferase (323 aa).

16–23 (GPTASGKT) contacts ATP. Substrate is bound at residue 18 to 23 (TASGKT). Interaction with substrate tRNA stretches follow at residues 41 to 44 (DSAL), 165 to 169 (QRIQR), 253 to 258 (RCVGYR), and 286 to 293 (KRQITWLR).

It belongs to the IPP transferase family. Monomer. Mg(2+) serves as cofactor.

It catalyses the reaction adenosine(37) in tRNA + dimethylallyl diphosphate = N(6)-dimethylallyladenosine(37) in tRNA + diphosphate. In terms of biological role, catalyzes the transfer of a dimethylallyl group onto the adenine at position 37 in tRNAs that read codons beginning with uridine, leading to the formation of N6-(dimethylallyl)adenosine (i(6)A). In Ralstonia nicotianae (strain ATCC BAA-1114 / GMI1000) (Ralstonia solanacearum), this protein is tRNA dimethylallyltransferase.